Here is an 80-residue protein sequence, read N- to C-terminus: Conotoxin Lt6.2 (80 aa).

Positions 1-24 are cleaved as a signal peptide; sequence MKLTRVLIIAVLFLTAYQLTTVET. Positions 25 to 47 are excised as a propeptide; the sequence is YSRGKWMHRALRSTGKNPKVTRE. 3 disulfide bridges follow: Cys48-Cys62, Cys55-Cys66, and Cys61-Cys73.

The protein belongs to the conotoxin O1 superfamily. In terms of tissue distribution, expressed by the venom duct.

It is found in the secreted. The polypeptide is Conotoxin Lt6.2 (Conus litteratus (Lettered cone)).